A 537-amino-acid polypeptide reads, in one-letter code: Tegument protein BRRF2 (537 aa).

4 disordered regions span residues 321 to 366 (RPRF…AVPP), 378 to 398 (AKQN…ETSP), 414 to 466 (SKQH…DEEF), and 486 to 537 (GLRV…LSVV). Residues 334–347 (EPQQTCSQLTSRGN) are compositionally biased toward polar residues. Residues 423–441 (SSQAAPSFSSVAPVASLSG) show a composition bias toward low complexity. Residues 492-517 (DEDEDGSEDGEFSDLDLSDSDHEGDE) show a composition bias toward acidic residues.

It belongs to the lymphocryptovirus BRRF2 family.

It localises to the virion tegument. In Homo sapiens (Human), this protein is Tegument protein BRRF2.